Here is a 349-residue protein sequence, read N- to C-terminus: Hyaluronidase Tab y 2.0101 (349 aa).

The N-terminal stretch at 1–25 is a signal peptide; it reads MKLHQGLVCLSVLILLPTCILGDRK. 2 cysteine pairs are disulfide-bonded: Cys37–Cys328 and Cys205–Cys216. Residues Asn41, Asn81, Asn99, and Asn119 are each glycosylated (N-linked (GlcNAc...) asparagine). Residue Glu129 is the Proton donor of the active site. Asn147 carries N-linked (GlcNAc...) asparagine glycosylation. Residues Asn251 and Asn297 are each glycosylated (N-linked (GlcNAc...) asparagine).

The protein belongs to the glycosyl hydrolase 56 family. As to expression, expressed in salivary glands.

The protein localises to the secreted. It catalyses the reaction Random hydrolysis of (1-&gt;4)-linkages between N-acetyl-beta-D-glucosamine and D-glucuronate residues in hyaluronate.. Its function is as follows. Hydrolyzes high molecular weight hyaluronic acid to produce small oligosaccharides. The polypeptide is Hyaluronidase Tab y 2.0101 (Tabanus yao (Horsefly)).